The chain runs to 57 residues: MAVQKSRKTRSKRGMRRSHDALTAPAQLSVDATSGETHRRHHMTADGFYRGKKVIEL.

Over residues 1–16 the composition is skewed to basic residues; that stretch reads MAVQKSRKTRSKRGMR. A disordered region spans residues 1 to 45; sequence MAVQKSRKTRSKRGMRRSHDALTAPAQLSVDATSGETHRRHHMTA.

Belongs to the bacterial ribosomal protein bL32 family.

This Psychromonas ingrahamii (strain DSM 17664 / CCUG 51855 / 37) protein is Large ribosomal subunit protein bL32.